Reading from the N-terminus, the 342-residue chain is S-adenosylmethionine:tRNA ribosyltransferase-isomerase (342 aa).

Belongs to the QueA family. Monomer.

The protein localises to the cytoplasm. The enzyme catalyses 7-aminomethyl-7-carbaguanosine(34) in tRNA + S-adenosyl-L-methionine = epoxyqueuosine(34) in tRNA + adenine + L-methionine + 2 H(+). Its pathway is tRNA modification; tRNA-queuosine biosynthesis. Functionally, transfers and isomerizes the ribose moiety from AdoMet to the 7-aminomethyl group of 7-deazaguanine (preQ1-tRNA) to give epoxyqueuosine (oQ-tRNA). The polypeptide is S-adenosylmethionine:tRNA ribosyltransferase-isomerase (Brevibacillus brevis (strain 47 / JCM 6285 / NBRC 100599)).